The chain runs to 300 residues: (R)-3-hydroxydecanoyl-ACP:CoA transacylase (300 aa).

Residues 29 to 253 form the AB hydrolase-1 domain; it reads TIILVNGSLS…HTIRNAGHFI (225 aa).

It functions in the pathway polyester biosynthesis; polyhydroxyalkanoate biosynthesis. Its function is as follows. Catalyzes the transfer of the acyl moiety from in vitro synthesized 3-hydroxydecanoyl-CoA to acyl carrier protein. In Pseudomonas aeruginosa (strain ATCC 15692 / DSM 22644 / CIP 104116 / JCM 14847 / LMG 12228 / 1C / PRS 101 / PAO1), this protein is (R)-3-hydroxydecanoyl-ACP:CoA transacylase (phaG).